We begin with the raw amino-acid sequence, 310 residues long: tRNA dimethylallyltransferase (310 aa).

13 to 20 (GPTASGKT) lines the ATP pocket. 15–20 (TASGKT) contributes to the substrate binding site. Interaction with substrate tRNA regions lie at residues 38 to 41 (DSAL), 162 to 166 (QRLSR), 243 to 248 (RCVGYR), and 276 to 283 (KRQITWLR).

It belongs to the IPP transferase family. As to quaternary structure, monomer. The cofactor is Mg(2+).

The enzyme catalyses adenosine(37) in tRNA + dimethylallyl diphosphate = N(6)-dimethylallyladenosine(37) in tRNA + diphosphate. Functionally, catalyzes the transfer of a dimethylallyl group onto the adenine at position 37 in tRNAs that read codons beginning with uridine, leading to the formation of N6-(dimethylallyl)adenosine (i(6)A). The chain is tRNA dimethylallyltransferase from Vibrio parahaemolyticus serotype O3:K6 (strain RIMD 2210633).